The chain runs to 194 residues: Adenylate kinase (194 aa).

Glycine 10–threonine 15 is a binding site for ATP. An NMP region spans residues serine 30–valine 59. AMP contacts are provided by residues threonine 31, arginine 36, glutamate 57–valine 59, glycine 85–arginine 88, and glutamine 92. Residues lysine 126–aspartate 142 form an LID region. Arginine 127 provides a ligand contact to ATP. 2 residues coordinate AMP: arginine 139 and arginine 150. Alanine 178 is a binding site for ATP.

Belongs to the adenylate kinase family. As to quaternary structure, monomer.

It is found in the cytoplasm. The enzyme catalyses AMP + ATP = 2 ADP. It participates in purine metabolism; AMP biosynthesis via salvage pathway; AMP from ADP: step 1/1. Its function is as follows. Catalyzes the reversible transfer of the terminal phosphate group between ATP and AMP. Plays an important role in cellular energy homeostasis and in adenine nucleotide metabolism. This Chelativorans sp. (strain BNC1) protein is Adenylate kinase.